Here is a 421-residue protein sequence, read N- to C-terminus: UDP-N-acetylglucosamine 1-carboxyvinyltransferase (421 aa).

Residue Lys22–Asn23 participates in phosphoenolpyruvate binding. Arg91 provides a ligand contact to UDP-N-acetyl-alpha-D-glucosamine. Catalysis depends on Cys115, which acts as the Proton donor. Cys115 is modified (2-(S-cysteinyl)pyruvic acid O-phosphothioketal). UDP-N-acetyl-alpha-D-glucosamine-binding positions include Arg120–Leu124, Asp306, and Ile328.

This sequence belongs to the EPSP synthase family. MurA subfamily.

The protein resides in the cytoplasm. It carries out the reaction phosphoenolpyruvate + UDP-N-acetyl-alpha-D-glucosamine = UDP-N-acetyl-3-O-(1-carboxyvinyl)-alpha-D-glucosamine + phosphate. The protein operates within cell wall biogenesis; peptidoglycan biosynthesis. In terms of biological role, cell wall formation. Adds enolpyruvyl to UDP-N-acetylglucosamine. The protein is UDP-N-acetylglucosamine 1-carboxyvinyltransferase of Methylacidiphilum infernorum (isolate V4) (Methylokorus infernorum (strain V4)).